Consider the following 349-residue polypeptide: MSVGIVSYGAYIPKFRIKVEDIARVWGDDADILSAGLMVYEKSVPDLDEDTATIAVEAARSAVLRNNIDAKRIGAVYTGSESHPYAVKPTSTIVAEAIEATPVLTAADFEFACKAGTAAMQACMGLVGSGMVDLGMAIGADVSQGAPGDALEYTAAAGGVSYIIGNKESEMIAVIEDTFSFTTDTPDFWRREGMPYPEHGGRFTGEPGYFKHVTGAANGLMEKMGTKPSDYDYAVFHQPNGKFPSRVAKMLGFTKEQIKPGLVVPWLGNTYSGSCMMGIAATLDQAKPGDRIFATAFGSGAGGDAFSFRVTDKIDEVRDAAPKVLDLLKDPVYMDYAMYAKHKGKIRLA.

2 residues coordinate (3S)-3-hydroxy-3-methylglutaryl-CoA: Asp29 and Ala30. Glu81 serves as the catalytic Proton donor/acceptor. Residues Cys113 and Thr154 each contribute to the (3S)-3-hydroxy-3-methylglutaryl-CoA site. The active-site Acyl-thioester intermediate is the Cys113. Residue Arg202 coordinates CoA. (3S)-3-hydroxy-3-methylglutaryl-CoA-binding residues include Thr204 and His237. His237 acts as the Proton donor/acceptor in catalysis. Lys242 contributes to the CoA binding site. (3S)-3-hydroxy-3-methylglutaryl-CoA-binding residues include Arg246, Asn269, and Ser299.

This sequence belongs to the thiolase-like superfamily. Archaeal HMG-CoA synthase family. As to quaternary structure, interacts with acetoacetyl-CoA thiolase that catalyzes the precedent step in the pathway and with a DUF35 protein. The acetoacetyl-CoA thiolase/HMG-CoA synthase complex channels the intermediate via a fused CoA-binding site, which allows for efficient coupling of the endergonic thiolase reaction with the exergonic HMGCS reaction.

It catalyses the reaction acetoacetyl-CoA + acetyl-CoA + H2O = (3S)-3-hydroxy-3-methylglutaryl-CoA + CoA + H(+). Its pathway is metabolic intermediate biosynthesis; (R)-mevalonate biosynthesis; (R)-mevalonate from acetyl-CoA: step 2/3. Catalyzes the condensation of acetyl-CoA with acetoacetyl-CoA to form 3-hydroxy-3-methylglutaryl-CoA (HMG-CoA). Functions in the mevalonate (MVA) pathway leading to isopentenyl diphosphate (IPP), a key precursor for the biosynthesis of isoprenoid compounds that are building blocks of archaeal membrane lipids. This is Hydroxymethylglutaryl-CoA synthase from Methanococcoides burtonii (strain DSM 6242 / NBRC 107633 / OCM 468 / ACE-M).